We begin with the raw amino-acid sequence, 780 residues long: Carboxysome assembly protein CsoS2 (780 aa).

A compositionally biased stretch (basic and acidic residues) spans 1 to 15 (MARLSSRELALERRK). Disordered stretches follow at residues 1-173 (MARL…RAIE), 189-212 (KHGK…NPDL), 226-281 (TKAG…NRSV), 330-349 (NRVT…DEPG), and 382-444 (SLTQ…TGVT). One copy of the N-repeat 1 repeat lies at 5–24 (SSRELALERRKALTTSGKKS). The segment covering 48–78 (AAAAVEPTAPAVSAPVKPTVSFTPASPSSSS) has biased composition (low complexity). The stretch at 86–105 (PSRDLVLARRDALSRRGKTA) is one N-repeat 2 repeat. Over residues 86–116 (PSRDLVLARRDALSRRGKTADTSRDRNRADV) the composition is skewed to basic and acidic residues. A compositionally biased stretch (low complexity) spans 117 to 130 (ARQTQAAAPVAASA). 2 N-repeat repeats span residues 175–194 (PSRA…GKTA) and 213–235 (TSRE…NKQS). 6 M-repeat repeats span residues 260 to 309 (KVGE…QTFC), 320 to 369 (KVRV…AAYC), 378 to 417 (KVGH…GDQY), 431 to 480 (KVGQ…NAFC), 490 to 535 (KVGF…LENA), and 541 to 599 (TSAV…ATAC). The interval 260–608 (KVGESTTSTG…CGNEAPAGTD (349 aa)) is middle region. Over residues 264–276 (STTSTGQTVTGTQ) the composition is skewed to low complexity. 2 stretches are compositionally biased toward low complexity: residues 387–403 (GRPV…SVTG) and 432–444 (VGQS…TGVT). Residues 609–749 (SHGQAPEGAA…ATVPHERKRN (141 aa)) are C-terminal domain. C-repeat repeat units follow at residues 623 to 669 (SVMS…TEQF) and 693 to 726 (EQPA…EGVS). Disordered stretches follow at residues 631 to 661 (AQQQ…LAGG) and 686 to 780 (AVVS…GARG). The segment covering 641 to 651 (VTGTSYEQGNR) has biased composition (polar residues). The span at 709–720 (TGDDWDRGEHVT) shows a compositional bias: basic and acidic residues. The C-terminal peptide stretch occupies residues 750–780 (EENEWPVSRVTGSSGNTEKGSLITVSGGARG). The segment covering 759–768 (VTGSSGNTEK) has biased composition (polar residues).

It belongs to the CsoS2 family. In terms of assembly, interacts via its N-terminal repeats with RuBisCO. Interacts with the major shell protein CsoS1. Post-translationally, unlike H.neapolitanus and predictions for P.marinus strain MIT 9313, this protein is not thought to have ribosomal frameshifting.

In terms of biological role, required for alpha-carboxysome (Cb) assembly, mediates interaction between RuBisCO and the carboxysome shell. The protein is probably intrinsically disordered. The C-terminal repeats act as the encapsulation signal to target proteins to the Cb; they are necessary and sufficient to target both CsoS2 and foreign proteins to the Cb. The N-terminal repeats of this protein bind simultaneously to both subunits of RuBisCO. Probably also interacts with the major shell proteins (CsoS1); that interaction would increase the local concentration of CsoS2 so that it can condense RuBisCO and full carboxysomes can be formed. This chain is Carboxysome assembly protein CsoS2, found in Parasynechococcus marenigrum (strain WH8102).